The primary structure comprises 223 residues: Translation initiation factor 6 (223 aa).

The protein belongs to the eIF-6 family.

Its function is as follows. Binds to the 50S ribosomal subunit and prevents its association with the 30S ribosomal subunit to form the 70S initiation complex. The chain is Translation initiation factor 6 from Sulfolobus acidocaldarius (strain ATCC 33909 / DSM 639 / JCM 8929 / NBRC 15157 / NCIMB 11770).